Consider the following 229-residue polypeptide: 1-Cys peroxiredoxin PER1 (229 aa).

One can recognise a Thioredoxin domain in the interval 4–173; the sequence is LTIGDTVPNL…VLRAVDSLLT (170 aa). Cysteine 46 serves as the catalytic Cysteine sulfenic acid (-SOH) intermediate. The Bipartite nuclear localization signal motif lies at 205–228; it reads RKMFPQGFETADLPSKKGYLRFTK.

It belongs to the peroxiredoxin family. Prx6 subfamily.

It localises to the nucleus. The protein localises to the cytoplasm. It carries out the reaction a hydroperoxide + [thioredoxin]-dithiol = an alcohol + [thioredoxin]-disulfide + H2O. Thiol-specific peroxidase that catalyzes the reduction of hydrogen peroxide and organic hydroperoxides to water and alcohols, respectively. Seems to contribute to the inhibition of germination during stress. This Zea mays (Maize) protein is 1-Cys peroxiredoxin PER1 (PER1).